The following is a 589-amino-acid chain: DNA ligase (589 aa).

Glu250 provides a ligand contact to ATP. Catalysis depends on Lys252, which acts as the N6-AMP-lysine intermediate. Positions 257, 272, 302, 342, 417, and 423 each coordinate ATP.

Belongs to the ATP-dependent DNA ligase family. Mg(2+) serves as cofactor.

It carries out the reaction ATP + (deoxyribonucleotide)n-3'-hydroxyl + 5'-phospho-(deoxyribonucleotide)m = (deoxyribonucleotide)n+m + AMP + diphosphate.. Its function is as follows. DNA ligase that seals nicks in double-stranded DNA during DNA replication, DNA recombination and DNA repair. In Cenarchaeum symbiosum (strain A), this protein is DNA ligase.